The following is a 517-amino-acid chain: GTPase Obg (517 aa).

One can recognise an Obg domain in the interval 2 to 159 (ATFVDTVTLH…GDVVLELKVV (158 aa)). In terms of domain architecture, OBG-type G spans 160–336 (ADVALVGYPS…LSFALAELVK (177 aa)). Residues 166–173 (GYPSAGKS), 191–195 (FTTLH), 212–215 (DVPG), 288–291 (NKID), and 317–319 (STV) each bind GTP. Residues Ser173 and Thr193 each contribute to the Mg(2+) site. Residues 355 to 439 (PRAVDEKPFT…GDGVVFDWEP (85 aa)) enclose the OCT domain. Positions 490-517 (EGEAGLWADEDGTGQDGTDEDATTDAKA) are disordered. A compositionally biased stretch (acidic residues) spans 497-517 (ADEDGTGQDGTDEDATTDAKA).

It belongs to the TRAFAC class OBG-HflX-like GTPase superfamily. OBG GTPase family. In terms of assembly, monomer. It depends on Mg(2+) as a cofactor.

The protein localises to the cytoplasm. Functionally, an essential GTPase which binds GTP, GDP and possibly (p)ppGpp with moderate affinity, with high nucleotide exchange rates and a fairly low GTP hydrolysis rate. Plays a role in control of the cell cycle, stress response, ribosome biogenesis and in those bacteria that undergo differentiation, in morphogenesis control. The sequence is that of GTPase Obg from Clavibacter sepedonicus (Clavibacter michiganensis subsp. sepedonicus).